The sequence spans 3414 residues: Genome polyprotein (3414 aa).

The segment at 1 to 30 is disordered; the sequence is MVKKAILKGKGGGPPRRVSKETATKTRQPR. The Cytoplasmic portion of the chain corresponds to 2–98; it reads VKKAILKGKG…LQKRGKRRSA (97 aa). Positions 97-117 are cleaved as a propeptide — ER anchor for the capsid protein C, removed in mature form by serine protease NS3; it reads SATDWMSWLLVITLLGMTLAA. Residues 99 to 119 form a helical membrane-spanning segment; that stretch reads TDWMSWLLVITLLGMTLAATV. Residues 120-242 are Extracellular-facing; it reads RKERDGSTVI…HLTRVEGWVW (123 aa). N-linked (GlcNAc...) asparagine; by host glycosylation occurs at asparagine 144. A helical transmembrane segment spans residues 243–260; sequence KNKLLALAMVTVVWLTLE. Position 261 (serine 261) is a topological domain, cytoplasmic. A helical transmembrane segment spans residues 262–280; that stretch reads VVTRVAVLVVLLCLAPVYA. Topologically, residues 281–727 are extracellular; that stretch reads SRCTHLENRD…HTVLGGAFNS (447 aa). 6 cysteine pairs are disulfide-bonded: cysteine 283–cysteine 310, cysteine 340–cysteine 396, cysteine 340–cysteine 401, cysteine 354–cysteine 385, cysteine 372–cysteine 396, and cysteine 372–cysteine 401. A fusion peptide region spans residues 378-391; that stretch reads DRGWGNHCGLFGKG. N-linked (GlcNAc...) asparagine; by host glycosylation is present at asparagine 434. 2 disulfides stabilise this stretch: cysteine 466–cysteine 570 and cysteine 587–cysteine 618. Residues 728–748 form a helical membrane-spanning segment; that stretch reads IFGGVGFLPKLLLGVALAWLG. The Extracellular segment spans residues 749 to 755; sequence LNMRNPT. A helical membrane pass occupies residues 756 to 776; it reads MSMSFLLAGGLVLAMTLGVGA. The Extracellular segment spans residues 777-1132; sequence DVGCAVDTER…RSMVVADNGE (356 aa). Cystine bridges form between cysteine 780–cysteine 791, cysteine 831–cysteine 920, cysteine 955–cysteine 1000, cysteine 1057–cysteine 1106, cysteine 1068–cysteine 1090, and cysteine 1089–cysteine 1093. N-linked (GlcNAc...) asparagine; by host glycans are attached at residues asparagine 861, asparagine 983, and asparagine 999. A helical membrane pass occupies residues 1133–1153; the sequence is LLSEGGVPGIVALFVVLEYII. Topologically, residues 1154–1158 are cytoplasmic; sequence RRRPS. A helical transmembrane segment spans residues 1159 to 1179; it reads TGTTVVWGGIVVLALLVTGMV. Residues 1180–1187 lie on the Lumenal side of the membrane; the sequence is RIESLVRY. A helical membrane pass occupies residues 1188 to 1208; it reads VVAVGITFHLELGPEIVALML. Residues 1209 to 1293 lie on the Cytoplasmic side of the membrane; the sequence is LQAVFELRVG…LLMALMTQQD (85 aa). A helical membrane pass occupies residues 1294–1314; that stretch reads VVTVHHGLVCFLSVASACSVW. At 1315 to 1327 the chain is on the lumenal side; sequence RLLKGHREQKGLT. A helical transmembrane segment spans residues 1328–1348; sequence WVVPLAGLLGGEGSGIRLLAF. Over 1349–1359 the chain is Cytoplasmic; it reads WELSAHRGRRS. The helical transmembrane segment at 1360–1378 threads the bilayer; it reads FSEPLTVVGVMLTLASGMM. Residues 1379 to 1382 are Lumenal-facing; the sequence is RHTS. The chain crosses the membrane as a helical span at residues 1383 to 1403; sequence QEALCALAVASFLLLMLVLGT. Residues 1404-1454 are Cytoplasmic-facing; it reads RKMQLVAEWSGCVEWYPELVNEGGEVSLRVRQDAMGNFHLTELEKEERMMA. Residues 1410–1449 are interacts with and activates NS3 protease; sequence AEWSGCVEWYPELVNEGGEVSLRVRQDAMGNFHLTELEKE. An intramembrane region (helical) is located at residues 1455-1475; that stretch reads FWLIAGLAASAIHWSGILGVM. Over 1476-2160 the chain is Cytoplasmic; sequence GLWTLTEMLR…RMAERDAPEA (685 aa). Positions 1490-1669 constitute a Peptidase S7 domain; it reads SDLVFSGQGG…EAEKSRPNLP (180 aa). Catalysis depends on charge relay system; for serine protease NS3 activity residues histidine 1543, aspartate 1567, and serine 1627. The 157-residue stretch at 1675–1831 folds into the Helicase ATP-binding domain; the sequence is TGWTSKGQIT…ESNGAITSEE (157 aa). 1688–1695 provides a ligand contact to ATP; sequence MHPGSGKT. Residues 1779-1782 carry the DEAH box motif; that stretch reads DEAH. The 160-residue stretch at 1841–2000 folds into the Helicase C-terminal domain; that stretch reads DGFDWITEYE…TLRGPVATFY (160 aa). The residue at position 1883 (lysine 1883) is an N6-acetyllysine; by host. Residues 2161-2181 form a helical membrane-spanning segment; the sequence is FLTMVEMMVLGLATLGVIWCF. Over 2182 to 2189 the chain is Lumenal; the sequence is VVRTSISR. Positions 2190–2210 form an intramembrane region, helical; sequence MMLGTLVLLASLLLLWAGGVG. Position 2211 (tyrosine 2211) is a topological domain, lumenal. The helical transmembrane segment at 2212-2232 threads the bilayer; it reads GNMAGVALIFYTLLTVLQPEA. Over 2233 to 2244 the chain is Cytoplasmic; sequence GKQRSSDDNKLA. A helical transmembrane segment spans residues 2245–2265; it reads YFLLTLCSLAGLVAANEMGFL. Residues 2266–2299 lie on the Lumenal side of the membrane; it reads EKTKADLSTALWSEREEPRPWSEWTNVDIQPARS. The helical intramembrane region spans 2300 to 2320; sequence WGTYVLVVSLFTPYIIHQLQT. Topologically, residues 2321 to 2343 are lumenal; that stretch reads KIQQLVNSAVASGAQAMRDLGGG. An intramembrane region (helical) is located at residues 2344–2364; that stretch reads APFFGVAGHVMTLGVVSLIGA. At 2365 to 2368 the chain is on the lumenal side; sequence TPTS. The chain crosses the membrane as a helical span at residues 2369–2389; sequence LMVGVGLAALHLAIVVSGLEA. Residues 2390–2432 lie on the Cytoplasmic side of the membrane; that stretch reads ELTQRAHKVFFSAMVRNPMVDGDVINPFGEGEAKPALYERKMS. Residues 2433-2453 traverse the membrane as a helical segment; it reads LVLATVLCLMSVVMNRTVASI. Residues 2454–2477 are Lumenal-facing; the sequence is TEASAVGLAAAGQLLRPEADTLWT. A helical transmembrane segment spans residues 2478–2498; it reads MPVACGMSGVVRGSLWGFLPL. Residues 2499–3414 lie on the Cytoplasmic side of the membrane; sequence GHRLWLRASG…WELRLESSII (916 aa). An mRNA cap 0-1 NS5-type MT domain is found at 2512–2776; sequence GGSEGDTLGD…ELDLGVGTRC (265 aa). S-adenosyl-L-methionine is bound at residue serine 2567. Residue serine 2567 is modified to Phosphoserine. Residue lysine 2572 is the For 2'-O-MTase activity of the active site. Residues glycine 2597, tryptophan 2598, threonine 2615, isoleucine 2616, aspartate 2642, and valine 2643 each coordinate S-adenosyl-L-methionine. The active-site For 2'-O-MTase activity is aspartate 2657. Isoleucine 2658 provides a ligand contact to S-adenosyl-L-methionine. Residues lysine 2694 and glutamate 2730 each act as for 2'-O-MTase activity in the active site. Positions 2730-2734 are interaction with host SCRIB; sequence EMYYS. Tyrosine 2732 contacts S-adenosyl-L-methionine. Zn(2+)-binding residues include glutamate 2950, histidine 2954, cysteine 2959, and cysteine 2962. In terms of domain architecture, RdRp catalytic spans 3040–3189; that stretch reads GLFYADDTAG…RPLDDRFGKA (150 aa). Zn(2+)-binding residues include histidine 3224, cysteine 3240, and cysteine 3359.

In the N-terminal section; belongs to the class I-like SAM-binding methyltransferase superfamily. mRNA cap 0-1 NS5-type methyltransferase family. As to quaternary structure, homodimer. Interacts (via N-terminus) with host EXOC1 (via C-terminus); this interaction results in EXOC1 degradation through the proteasome degradation pathway. In terms of assembly, forms heterodimers with envelope protein E in the endoplasmic reticulum and Golgi. Homodimer; in the endoplasmic reticulum and Golgi. Interacts with protein prM. Interacts with non-structural protein 1. As to quaternary structure, homodimer; Homohexamer when secreted. Interacts with envelope protein E. In terms of assembly, interacts (via N-terminus) with serine protease NS3. Forms a heterodimer with serine protease NS3. May form homooligomers. As to quaternary structure, forms a heterodimer with NS2B. Interacts with NS4B. Interacts with unphosphorylated RNA-directed RNA polymerase NS5; this interaction stimulates RNA-directed RNA polymerase NS5 guanylyltransferase activity. In terms of assembly, interacts with serine protease NS3. Interacts with NS1. Homodimer. Interacts with host STAT2; this interaction inhibits the phosphorylation of the latter, and, when all viral proteins are present (polyprotein), targets STAT2 for degradation. Interacts with serine protease NS3. Interacts with host SCRIB; this interaction targets NS5 to the cell membrane periphery and nucleus, thereby allowing efficient host nuclear STAT1 inhibition. Specific enzymatic cleavages in vivo yield mature proteins. Cleavages in the lumen of endoplasmic reticulum are performed by host signal peptidase, whereas cleavages in the cytoplasmic side are performed by serine protease NS3. Signal cleavage at the 2K-4B site requires a prior NS3 protease-mediated cleavage at the 4A-2K site. In terms of processing, cleaved in post-Golgi vesicles by a host furin, releasing the mature small envelope protein M, and peptide pr. This cleavage is incomplete as up to 30% of viral particles still carry uncleaved prM. Post-translationally, N-glycosylated. N-glycosylated. The excreted form is glycosylated and this is required for efficient secretion of the protein from infected cells. In terms of processing, acetylated by host KAT5. Acetylation modulates NS3 RNA-binding and unwinding activities and plays an important positive role for viral replication. Post-translationally, phosphorylated on serines residues. This phosphorylation may trigger NS5 nuclear localization.

Its subcellular location is the virion. It localises to the host nucleus. The protein resides in the host cytoplasm. The protein localises to the host perinuclear region. It is found in the secreted. Its subcellular location is the virion membrane. It localises to the host endoplasmic reticulum membrane. The catalysed reaction is Selective hydrolysis of -Xaa-Xaa-|-Yaa- bonds in which each of the Xaa can be either Arg or Lys and Yaa can be either Ser or Ala.. It carries out the reaction RNA(n) + a ribonucleoside 5'-triphosphate = RNA(n+1) + diphosphate. It catalyses the reaction a ribonucleoside 5'-triphosphate + H2O = a ribonucleoside 5'-diphosphate + phosphate + H(+). The enzyme catalyses ATP + H2O = ADP + phosphate + H(+). The catalysed reaction is a 5'-end (5'-triphosphoguanosine)-ribonucleoside in mRNA + S-adenosyl-L-methionine = a 5'-end (N(7)-methyl 5'-triphosphoguanosine)-ribonucleoside in mRNA + S-adenosyl-L-homocysteine. It carries out the reaction a 5'-end (N(7)-methyl 5'-triphosphoguanosine)-ribonucleoside in mRNA + S-adenosyl-L-methionine = a 5'-end (N(7)-methyl 5'-triphosphoguanosine)-(2'-O-methyl-ribonucleoside) in mRNA + S-adenosyl-L-homocysteine + H(+). In terms of biological role, plays a role in virus budding by binding to the cell membrane and gathering the viral RNA into a nucleocapsid that forms the core of a mature virus particle. During virus entry, may induce genome penetration into the host cytoplasm after hemifusion induced by the surface proteins. Can migrate to the cell nucleus where it modulates host functions. Inhibits RNA silencing by interfering with host Dicer. Its function is as follows. Prevents premature fusion activity of envelope proteins in trans-Golgi by binding to envelope protein E at pH6.0. After virion release in extracellular space, gets dissociated from E dimers. Functionally, acts as a chaperone for envelope protein E during intracellular virion assembly by masking and inactivating envelope protein E fusion peptide. prM is the only viral peptide matured by host furin in the trans-Golgi network probably to avoid catastrophic activation of the viral fusion activity in acidic Golgi compartment prior to virion release. prM-E cleavage is inefficient, and many virions are only partially matured. These uncleaved prM would play a role in immune evasion. In terms of biological role, may play a role in virus budding. Exerts cytotoxic effects by activating a mitochondrial apoptotic pathway through M ectodomain. May display a viroporin activity. Binds to host cell surface receptor and mediates fusion between viral and cellular membranes. Envelope protein is synthesized in the endoplasmic reticulum in the form of heterodimer with protein prM. They play a role in virion budding in the ER, and the newly formed immature particle is covered with 60 spikes composed of heterodimer between precursor prM and envelope protein E. The virion is transported to the Golgi apparatus where the low pH causes dissociation of PrM-E heterodimers and formation of E homodimers. prM-E cleavage is inefficient, and many virions are only partially matured. These uncleaved prM would play a role in immune evasion. Its function is as follows. Involved in immune evasion, pathogenesis and viral replication. Once cleaved off the polyprotein, is targeted to three destinations: the viral replication cycle, the plasma membrane and the extracellular compartment. Essential for viral replication. Required for formation of the replication complex and recruitment of other non-structural proteins to the ER-derived membrane structures. Excreted as a hexameric lipoparticle that plays a role against host immune response. Antagonizing the complement function. Binds to the host macrophages and dendritic cells. Inhibits signal transduction originating from Toll-like receptor 3 (TLR3). Functionally, component of the viral RNA replication complex that functions in virion assembly and antagonizes the host immune response. In terms of biological role, required cofactor for the serine protease function of NS3. May have membrane-destabilizing activity and form viroporins. Displays three enzymatic activities: serine protease, NTPase and RNA helicase. NS3 serine protease, in association with NS2B, performs its autocleavage and cleaves the polyprotein at dibasic sites in the cytoplasm: C-prM, NS2A-NS2B, NS2B-NS3, NS3-NS4A, NS4A-2K and NS4B-NS5. NS3 RNA helicase binds RNA and unwinds dsRNA in the 3' to 5' direction. Its function is as follows. Regulates the ATPase activity of the NS3 helicase activity. NS4A allows NS3 helicase to conserve energy during unwinding. Functionally, functions as a signal peptide for NS4B and is required for the interferon antagonism activity of the latter. In terms of biological role, induces the formation of ER-derived membrane vesicles where the viral replication takes place. Inhibits interferon (IFN)-induced host STAT1 phosphorylation and nuclear translocation, thereby preventing the establishment of cellular antiviral state by blocking the IFN-alpha/beta pathway. Inhibits STAT2 translocation in the nucleus after IFN-alpha treatment. Replicates the viral (+) and (-) genome, and performs the capping of genomes in the cytoplasm. NS5 methylates viral RNA cap at guanine N-7 and ribose 2'-O positions. Besides its role in RNA genome replication, also prevents the establishment of cellular antiviral state by blocking the interferon-alpha/beta (IFN-alpha/beta) signaling pathway. Inhibits host TYK2 and STAT2 phosphorylation, thereby preventing activation of JAK-STAT signaling pathway. This Tick-borne encephalitis virus European subtype (strain Neudoerfl) (NEUV) protein is Genome polyprotein.